Consider the following 80-residue polypeptide: MNLKVLAVFVLCAILVVVTAERRGTETGGYKKDTLQDLKKRTHDCFDRYREAACTSDNIRLLCKTSAKYQINCKKSCGLC.

An N-terminal signal peptide occupies residues 1–20 (MNLKVLAVFVLCAILVVVTA). Residues 21–39 (ERRGTETGGYKKDTLQDLK) constitute a propeptide that is removed on maturation. Residues 45-80 (CFDRYREAACTSDNIRLLCKTSAKYQINCKKSCGLC) enclose the ShKT domain. 3 cysteine pairs are disulfide-bonded: Cys45–Cys80, Cys54–Cys73, and Cys63–Cys77. The tract at residues 68 to 69 (KY) is crucial for binding to potassium channels.

It belongs to the sea anemone type 1 potassium channel toxin family. Type 1b subfamily.

Its subcellular location is the secreted. It is found in the nematocyst. Inhibits voltage-gated potassium channels (Kv1/KCNA). In Anemonia viridis (Snakelocks anemone), this protein is U-actitoxin-Avd9b.